Here is an 89-residue protein sequence, read N- to C-terminus: Small ribosomal subunit protein uS15 (89 aa).

The protein belongs to the universal ribosomal protein uS15 family. Part of the 30S ribosomal subunit. Forms a bridge to the 50S subunit in the 70S ribosome, contacting the 23S rRNA.

One of the primary rRNA binding proteins, it binds directly to 16S rRNA where it helps nucleate assembly of the platform of the 30S subunit by binding and bridging several RNA helices of the 16S rRNA. In terms of biological role, forms an intersubunit bridge (bridge B4) with the 23S rRNA of the 50S subunit in the ribosome. This is Small ribosomal subunit protein uS15 from Serratia proteamaculans (strain 568).